Here is a 349-residue protein sequence, read N- to C-terminus: Polyamine aminopropyltransferase 2 (349 aa).

One can recognise a PABS domain in the interval 29-267 (DGAITAIEDS…SSWGFLLASD (239 aa)). S-methyl-5'-thioadenosine is bound at residue glutamine 60. Histidine 91 and glutamate 115 together coordinate spermidine. S-methyl-5'-thioadenosine contacts are provided by residues aspartate 135 and 167-168 (DG). Aspartate 185 acts as the Proton acceptor in catalysis. Proline 194 contacts S-methyl-5'-thioadenosine.

This sequence belongs to the spermidine/spermine synthase family. In terms of assembly, homodimer or homotetramer.

The protein resides in the cytoplasm. It carries out the reaction S-adenosyl 3-(methylsulfanyl)propylamine + putrescine = S-methyl-5'-thioadenosine + spermidine + H(+). The protein operates within amine and polyamine biosynthesis; spermidine biosynthesis; spermidine from putrescine: step 1/1. In terms of biological role, catalyzes the irreversible transfer of a propylamine group from the amino donor S-adenosylmethioninamine (decarboxy-AdoMet) to putrescine (1,4-diaminobutane) to yield spermidine. The chain is Polyamine aminopropyltransferase 2 from Pseudomonas aeruginosa (strain ATCC 15692 / DSM 22644 / CIP 104116 / JCM 14847 / LMG 12228 / 1C / PRS 101 / PAO1).